The sequence spans 238 residues: Small ribosomal subunit protein uS2c (238 aa).

This sequence belongs to the universal ribosomal protein uS2 family.

The protein localises to the plastid. It is found in the chloroplast. The protein is Small ribosomal subunit protein uS2c (rps2) of Nuphar advena (Common spatterdock).